The chain runs to 343 residues: Flavonoid 3'-O-methyltransferase FOMT (343 aa).

S-adenosyl-L-homocysteine-binding residues include Gly184, Asp207, Asp227, Met228, Met240, and Lys241. His245 (proton acceptor) is an active-site residue. Active-site residues include Glu273 and Glu305.

This sequence belongs to the class I-like SAM-binding methyltransferase superfamily. Cation-independent O-methyltransferase family. In terms of assembly, homodimer.

The catalysed reaction is 3',5-dihydroxy-3,4',7-trimethoxyflavone + S-adenosyl-L-methionine = 5-hydroxy-3,7,3',4'-tetramethoxyflavone + S-adenosyl-L-homocysteine + H(+). Its pathway is flavonoid metabolism. Its activity is regulated as follows. Inhibited by nickel (NiCl(2) and NiSO(4)) and para-chloromercuribenzoate. Its function is as follows. Catalyzes the 3'- or 5'-O-methylation of partially methylated flavonols, but does not accept quercetin or caffeate as substrates for methylation. This is Flavonoid 3'-O-methyltransferase FOMT from Chrysosplenium americanum (American golden saxifrage).